The primary structure comprises 391 residues: O-methyltransferase ATR12 (391 aa).

Residues 233–234 (GG), D259, and 279–280 (DF) each bind S-adenosyl-L-methionine. Catalysis depends on H299, which acts as the Proton acceptor.

It belongs to the class I-like SAM-binding methyltransferase superfamily. Cation-independent O-methyltransferase family. COMT subfamily.

It participates in mycotoxin biosynthesis. O-methyltransferase; part of the core atranone cluster (CAC) which products are predicted to catalyze most or all steps of mycotoxin atranone synthesis, starting from geranylgeranyl pyrophosphate (GGPP). The initial cyclization of GGPP to dolabellane is probably performed by the terpene cyclase ATR13. The Baeyer-Villiger oxidation near the end of the atranone synthesis, which converts atranones D and E to atranones F and G is predicted to be catalyzed by the monooxygenase ATR8. Of the CAC's other predicted gene products, the reducing PKS ATR6 might synthesize a polyketide chain. This polyketide is probably transferred onto the atranone backbone by the polyketide transferase ATR5. Other predicted CAC products include 4 oxygenases (ATR2, ATR3, ATR4, and ATR14), 3 short-chain reductases (ATR7, ATR9, and ATR10), and a methyltransferase (ATR12). These may all be involved in the various steps of atranone biosynthesis, although their specific roles must await experimental determination. The chain is O-methyltransferase ATR12 from Stachybotrys chlorohalonatus (strain IBT 40285).